A 304-amino-acid chain; its full sequence is MKEEETTYHVPVLLKESVDAMNISPDGTYVDVTFGGGGHSREILSRLGDGGRLLGFDQDEDAERNIVNDPHFTFVRSNFRYLHNFLRYHDIGEVDAILADLGVSSHHFDDSERGFSFRFDGKLDMRMNKRAGITAADVVNTYEEERLADIFYLYGELKNSRKLASVIVKARTGQKIETIGEFLEIIKPLFGREREKKELAKIFQALRIEVNQEMEALKEMLMAATEALKPGGRLVVITYHSLEDRMVKNIMKTGNVEGKTTQDFFGNLQTPFRLVNNKVIVPDEDEITRNPRSRSAKLRIAEKK.

Residues 37–39 (GGH), aspartate 57, phenylalanine 79, aspartate 100, and histidine 107 each bind S-adenosyl-L-methionine.

Belongs to the methyltransferase superfamily. RsmH family.

It localises to the cytoplasm. It carries out the reaction cytidine(1402) in 16S rRNA + S-adenosyl-L-methionine = N(4)-methylcytidine(1402) in 16S rRNA + S-adenosyl-L-homocysteine + H(+). In terms of biological role, specifically methylates the N4 position of cytidine in position 1402 (C1402) of 16S rRNA. The sequence is that of Ribosomal RNA small subunit methyltransferase H from Bacteroides fragilis (strain ATCC 25285 / DSM 2151 / CCUG 4856 / JCM 11019 / LMG 10263 / NCTC 9343 / Onslow / VPI 2553 / EN-2).